The sequence spans 448 residues: UDP-N-acetylmuramoylalanine--D-glutamate ligase (448 aa).

116–122 contacts ATP; it reads GSNAKST.

It belongs to the MurCDEF family.

The protein resides in the cytoplasm. It catalyses the reaction UDP-N-acetyl-alpha-D-muramoyl-L-alanine + D-glutamate + ATP = UDP-N-acetyl-alpha-D-muramoyl-L-alanyl-D-glutamate + ADP + phosphate + H(+). It functions in the pathway cell wall biogenesis; peptidoglycan biosynthesis. Its function is as follows. Cell wall formation. Catalyzes the addition of glutamate to the nucleotide precursor UDP-N-acetylmuramoyl-L-alanine (UMA). The polypeptide is UDP-N-acetylmuramoylalanine--D-glutamate ligase (Pseudomonas syringae pv. syringae (strain B728a)).